Reading from the N-terminus, the 289-residue chain is Poly-beta-1,6-N-acetyl-D-glucosamine N-deacetylase (289 aa).

Residues 1–30 (MKPFKLIFISALMILIMTNATPISHLNAQA) form the signal peptide. Residues 113–289 (RSVWINFDDM…KEWDGFDEEK (177 aa)) enclose the NodB homology domain.

Belongs to the polysaccharide deacetylase family.

The protein localises to the secreted. It is found in the cell wall. Its function is as follows. Catalyzes the N-deacetylation of poly-beta-1,6-N-acetyl-D-glucosamine (PNAG, also referred to as PIA), a biofilm adhesin polysaccharide. In fact, the IcaB deacetylase converts 15 to 20% of the GlcNAc residues of PNAG to glucosamine. N-deacetylation is crucial for attachment of the polysaccharide to the bacterial cell surface; it leads to the introduction of positive charges in the otherwise neutral PIA polymer, allowing electrostatic interactions. Deacetylation of the polymer is also essential for key virulence mechanisms of S.epidermidis, namely biofilm formation, colonization, and resistance to neutrophil phagocytosis and human antibacterial peptides. In Staphylococcus epidermidis (strain ATCC 35984 / DSM 28319 / BCRC 17069 / CCUG 31568 / BM 3577 / RP62A), this protein is Poly-beta-1,6-N-acetyl-D-glucosamine N-deacetylase (icaB).